The sequence spans 544 residues: MRLNSVALLSLVATALAAKAPFKIDFEVRRGESKDDLSPEDDSNPRFVKRDGSLDMTLTNKQTFYMATLKIGSNEDENRVLEDTGSSDLWVMSHDLKCVSAPISKRNERSFGHGTGVKLNERELMQKRKNLYQPSRTIETDEEKEASEKIHNKLFGFGSIYSTVYITEGPGAYSTFSPLVGTEGGSGGSGGSNTCRSYGSFNTENSDTFKKNNTNDFEIQYADDTSAIGIWGYDDVTISNVTVKDLSFAIANETSSDVGVLGIGLPGLEVTTQLRYTYQNLPLKLKADGIIAKSLYSLYLNTADAKAGSILFGAIDHAKYQGDLVTVKMMRTYSQISYPVRIQVPVLKIDVESSSGSTTNILSGTTGVVLDTGSTLSYVFSDTLQSLGKALNGQYSNSVGAYVVNCNLADSSRTVDIEFGGNKTIKVPISDLVLQASKSTCILGVMQQSSSSSYMLFGDNILRSAYIVYDLDDYEVSLAQVSYTNKESIEVIGASGITNSSGSGTTSSSGTSTSTSTRHSAGSIISNPVYGLLLSLLISYYVLV.

A signal peptide spans Met-1–Ala-17. The segment at Gly-31–Arg-50 is disordered. Residues Tyr-65–Ala-479 form the Peptidase A1 domain. Position 83–85 (Asp-83–Gly-85) interacts with pepstatin A. Cys-98 and Cys-195 are joined by a disulfide. Residue Thr-167 is part of the active site. Residues Asn-212, Asn-240, and Asn-252 are each glycosylated (N-linked (GlcNAc...) asparagine). Asp-371 is an active-site residue. Asp-371 to Thr-375 lines the pepstatin A pocket. A disulfide bridge connects residues Cys-406 and Cys-441. Asn-422 and Asn-499 each carry an N-linked (GlcNAc...) asparagine glycan. Residues Ser-500–Ser-520 are disordered.

Belongs to the peptidase A1 family. Monomer. The GPI-anchor is attached to the protein in the endoplasmic reticulum and serves to target the protein to the cell surface. There, the glucosamine-inositol phospholipid moiety is cleaved off and the GPI-modified mannoprotein is covalently attached via its lipidless GPI glycan remnant to the 1,6-beta-glucan of the outer cell wall layer.

The protein resides in the cell membrane. The protein localises to the secreted. Its subcellular location is the cell wall. The catalysed reaction is Preferential cleavage at the carboxyl of hydrophobic amino acids, but fails to cleave 15-Leu-|-Tyr-16, 16-Tyr-|-Leu-17 and 24-Phe-|-Phe-25 of insulin B chain. Activates trypsinogen, and degrades keratin.. In terms of biological role, secreted aspartic peptidases (SAPs) are a group of ten acidic hydrolases considered as key virulence factors. These enzymes supply the fungus with nutrient amino acids as well as are able to degrade the selected host's proteins involved in the immune defense. Moreover, acts toward human hemoglobin though limited proteolysis to generate a variety of antimicrobial hemocidins, enabling to compete with the other microorganisms of the same physiological niche using the microbicidal peptides generated from the host protein. Functionally, plays a key role in defense against host by cleaving histatin-5 (Hst 5), a peptide from human saliva that carries out fungicidal activity. The cleavage rate decreases in an order of SAP2 &gt; SAP9 &gt; SAP3 &gt; SAP7 &gt; SAP4 &gt; SAP1 &gt; SAP8. The first cleavage occurs between residues 'Lys-17' and 'His-18' of Hst 5, giving DSHAKRHHGYKRKFHEK and HHSHRGY peptides. Simultaneously, the DSHAKRHHGYKRK peptide is also formed. Further fragmentation by SAP9 results in FHEK product. The sequence is that of Secreted aspartic protease 9 from Candida albicans (Yeast).